Reading from the N-terminus, the 365-residue chain is Alanine racemase (365 aa).

The Proton acceptor; specific for D-alanine role is filled by K32. N6-(pyridoxal phosphate)lysine is present on K32. R128 is a binding site for substrate. Catalysis depends on Y257, which acts as the Proton acceptor; specific for L-alanine. A substrate-binding site is contributed by M305.

Belongs to the alanine racemase family. It depends on pyridoxal 5'-phosphate as a cofactor.

It catalyses the reaction L-alanine = D-alanine. The protein operates within amino-acid biosynthesis; D-alanine biosynthesis; D-alanine from L-alanine: step 1/1. Functionally, catalyzes the interconversion of L-alanine and D-alanine. May also act on other amino acids. This is Alanine racemase (alr) from Francisella tularensis subsp. novicida (strain U112).